The primary structure comprises 78 residues: Probable [Fe-S]-dependent transcriptional repressor (78 aa).

Residues cysteine 56, cysteine 61, cysteine 64, and cysteine 70 each contribute to the iron-sulfur cluster site.

It belongs to the FeoC family.

Functionally, may function as a transcriptional regulator that controls feoABC expression. The sequence is that of Probable [Fe-S]-dependent transcriptional repressor from Escherichia coli O9:H4 (strain HS).